Here is a 520-residue protein sequence, read N- to C-terminus: Cobyric acid synthase (520 aa).

The region spanning 275–453 (VLRVAVIRLP…WHGVLENDAF (179 aa)) is the GATase cobBQ-type domain. Residue Cys356 is the Nucleophile of the active site. His445 is an active-site residue.

This sequence belongs to the CobB/CobQ family. CobQ subfamily.

The protein operates within cofactor biosynthesis; adenosylcobalamin biosynthesis. Its function is as follows. Catalyzes amidations at positions B, D, E, and G on adenosylcobyrinic A,C-diamide. NH(2) groups are provided by glutamine, and one molecule of ATP is hydrogenolyzed for each amidation. The protein is Cobyric acid synthase of Frankia casuarinae (strain DSM 45818 / CECT 9043 / HFP020203 / CcI3).